Consider the following 1893-residue polypeptide: Protein TIC 214 (1893 aa).

6 helical membrane passes run 18–38 (IINS…FSIG), 63–83 (AITG…YAPL), 87–107 (LGRP…HFFW), 127–147 (LSIQ…HFIL), 175–195 (VGWL…LVWI), and 224–244 (IFSI…PSPI). 2 stretches are compositionally biased toward basic and acidic residues: residues 249-258 (MKETSETEER) and 268-287 (EIER…RSTE). A disordered region spans residues 249–317 (MKETSETEER…TEEIRVNGKE (69 aa)). The segment covering 298-309 (EKEDPDKIDETE) has biased composition (acidic residues). A helical transmembrane segment spans residues 1126-1146 (LHYFIKFFIERIYIDILLCLI).

It belongs to the TIC214 family. Part of the Tic complex.

It is found in the plastid. Its subcellular location is the chloroplast inner membrane. Involved in protein precursor import into chloroplasts. May be part of an intermediate translocation complex acting as a protein-conducting channel at the inner envelope. This Vitis vinifera (Grape) protein is Protein TIC 214.